The sequence spans 495 residues: Membrane-bound glycerophospholipid O-acyltransferase 1 (495 aa).

Helical transmembrane passes span 34–54, 70–90, 126–146, 180–200, 238–258, and 297–317; these read VNFV…RIYL, IFGI…LFVL, IYIF…MIVT, PSFL…AGPC, TGAV…FLTL, and YFAW…FSGV. Active-site residues include Asn350 and His381. Helical transmembrane passes span 371-391, 426-446, and 450-470; these read VLTF…YFTF, TWAV…MLAV, and ISLY…IILF. Residue Ser488 is modified to Phosphoserine.

The protein belongs to the membrane-bound acyltransferase family. As to expression, expressed in neutrophils.

The protein resides in the endoplasmic reticulum membrane. The catalysed reaction is a 1-acyl-sn-glycero-3-phospho-L-serine + an acyl-CoA = a 1,2-diacyl-sn-glycero-3-phospho-L-serine + CoA. The enzyme catalyses a 1-acyl-sn-glycero-3-phosphocholine + an acyl-CoA = a 1,2-diacyl-sn-glycero-3-phosphocholine + CoA. It catalyses the reaction a 1-acyl-sn-glycero-3-phosphoethanolamine + an acyl-CoA = a 1,2-diacyl-sn-glycero-3-phosphoethanolamine + CoA. It carries out the reaction 1-(9Z-octadecenoyl)-sn-glycero-3-phospho-L-serine + (9Z)-octadecenoyl-CoA = 1,2-di-(9Z)-octadecenoyl-sn-glycero-3-phospho-L-serine + CoA. The catalysed reaction is 1-(9Z-octadecenoyl)-sn-glycero-3-phospho-L-serine + octadecanoyl-CoA = 1-(9Z-octadecenoyl)-2-octadecanoyl-sn-glycero-3-phospho-L-serine + CoA. The enzyme catalyses 1-(9Z-octadecenoyl)-sn-glycero-3-phospho-L-serine + (9Z)-hexadecenoyl-CoA = 1-(9Z-octadecenoyl)-2-(9Z-hexadecenoyl)-sn-glycero-3-phospho-L-serine + CoA. It catalyses the reaction 1-(9Z-octadecenoyl)-sn-glycero-3-phospho-L-serine + (9Z,12Z)-octadecadienoyl-CoA = 1-(9Z-octadecenoyl)-2-(9Z,12Z-octadienoyl)-sn-glycero-3-phospho-L-serine + CoA. It carries out the reaction 1-hexadecanoyl-sn-glycero-3-phosphocholine + (9Z)-octadecenoyl-CoA = 1-hexadecanoyl-2-(9Z-octadecenoyl)-sn-glycero-3-phosphocholine + CoA. The catalysed reaction is a 1-O-(1Z-alkenyl)-sn-glycero-3-phosphoethanolamine + (9Z)-octadecenoyl-CoA = 1-O-(1Z)-alkenyl-2-(9Z)-octadecenoyl-sn-glycero-3-phosphoethanolamine + CoA. The enzyme catalyses 1-octadecanoyl-sn-glycero-3-phosphoethanolamine + (9Z)-octadecenoyl-CoA = 1-octadecanoyl-2-(9Z-octadecenoyl)-sn-glycero-3-phosphoethanolamine + CoA. It catalyses the reaction 1-(9Z-octadecenoyl)-sn-glycero-3-phosphoethanolamine + (9Z)-octadecenoyl-CoA = 1,2-di-(9Z-octadecenoyl)-sn-glycero-3-phosphoethanolamine + CoA. It carries out the reaction 1-hexadecanoyl-sn-glycero-3-phosphoethanolamine + (9Z)-octadecenoyl-CoA = 1-hexadecanoyl-2-(9Z-octadecenoyl)-sn-glycero-3-phosphoethanolamine + CoA. The catalysed reaction is 1-(10Z-heptadecenoyl)-sn-glycero-3-phosphoethanolamine + hexadecanoyl-CoA = 1-(10Z-heptadecenoyl)-2-hexadecanoyl-sn-glycero-3-phosphoethanolamine + CoA. The enzyme catalyses 1-(10Z-heptadecenoyl)-sn-glycero-3-phosphoethanolamine + (9Z)-octadecenoyl-CoA = 1-(10Z-heptadecenoyl)-2-(9Z-octadecenoyl)-sn-glycero-3-phosphoethanolamine + CoA. Its pathway is lipid metabolism; phospholipid metabolism. Partially inhibited by thimerosal. Functionally, acyltransferase which catalyzes the transfer of an acyl group from an acyl-CoA towards a lysophospholipid producing a phospholipid and participates in the reacylation step of the phospholipid remodeling pathway also known as the Lands cycle. Acts on lysophosphatidylserine (1-acyl-2-hydroxy-sn-glycero-3-phospho-L-serine or LPS) and lysophosphatidylethanolamine (1-acyl-sn-glycero-3-phosphoethanolamine or LPE), and to a lesser extend lysophosphatidylcholine. Prefers oleoyl-CoA as the acyl donor and 1-oleoyl-LPE as acceptor. May play a role in neurite outgrowth during neuronal differentiation. In Homo sapiens (Human), this protein is Membrane-bound glycerophospholipid O-acyltransferase 1.